A 349-amino-acid polypeptide reads, in one-letter code: Variable large protein 19 (349 aa).

The N-terminal stretch at 1–18 (MRKRISAIIMTLFMVLVS) is a signal peptide. Cys19 carries N-palmitoyl cysteine lipidation. Cys19 carries S-diacylglycerol cysteine lipidation.

This sequence belongs to the variable large protein (Vlp) family. Gamma subfamily.

Its subcellular location is the cell outer membrane. Its function is as follows. The Vlp and Vsp proteins are antigenically distinct proteins, only one vlp or vsp gene is transcriptionally active at any one time. Switching between these genes is a mechanism of host immune response evasion. The polypeptide is Variable large protein 19 (Borrelia hermsii).